A 358-amino-acid chain; its full sequence is UDP-N-acetylglucosamine--N-acetylmuramyl-(pentapeptide) pyrophosphoryl-undecaprenol N-acetylglucosamine transferase (358 aa).

Residues 13-15, asparagine 125, arginine 161, serine 189, isoleucine 244, and glutamine 288 contribute to the UDP-N-acetyl-alpha-D-glucosamine site; that span reads TGG.

Belongs to the glycosyltransferase 28 family. MurG subfamily.

The protein localises to the cell membrane. It catalyses the reaction di-trans,octa-cis-undecaprenyl diphospho-N-acetyl-alpha-D-muramoyl-L-alanyl-D-glutamyl-meso-2,6-diaminopimeloyl-D-alanyl-D-alanine + UDP-N-acetyl-alpha-D-glucosamine = di-trans,octa-cis-undecaprenyl diphospho-[N-acetyl-alpha-D-glucosaminyl-(1-&gt;4)]-N-acetyl-alpha-D-muramoyl-L-alanyl-D-glutamyl-meso-2,6-diaminopimeloyl-D-alanyl-D-alanine + UDP + H(+). Its pathway is cell wall biogenesis; peptidoglycan biosynthesis. Functionally, cell wall formation. Catalyzes the transfer of a GlcNAc subunit on undecaprenyl-pyrophosphoryl-MurNAc-pentapeptide (lipid intermediate I) to form undecaprenyl-pyrophosphoryl-MurNAc-(pentapeptide)GlcNAc (lipid intermediate II). The protein is UDP-N-acetylglucosamine--N-acetylmuramyl-(pentapeptide) pyrophosphoryl-undecaprenol N-acetylglucosamine transferase of Baumannia cicadellinicola subsp. Homalodisca coagulata.